The following is a 110-amino-acid chain: U1-lycotoxin-Ls1gg (110 aa).

The N-terminal stretch at 1–20 is a signal peptide; that stretch reads MKFVLLFGVLLVTLFSYSSA. Residues 21–44 constitute a propeptide that is removed on maturation; it reads EMLDDFDQADEDELLSLIEKEEAR. Disulfide bonds link C54–C71, C61–C89, and C73–C87.

It belongs to the neurotoxin 19 (CSTX) family. 03 subfamily. Expressed by the venom gland.

Its subcellular location is the secreted. The polypeptide is U1-lycotoxin-Ls1gg (Lycosa singoriensis (Wolf spider)).